We begin with the raw amino-acid sequence, 64 residues long: Large ribosomal subunit protein bL35 (64 aa).

Belongs to the bacterial ribosomal protein bL35 family.

This chain is Large ribosomal subunit protein bL35, found in Vibrio vulnificus (strain CMCP6).